Here is a 287-residue protein sequence, read N- to C-terminus: MDLILLLGIAVALLVILVTLFFFTKGKGSQESGKYNHPRVENEAQAAPRRAQVVRNQRNRARVAAAPAEEQHHAAADGGSDEDEIPHADFNGEKMGAKKRAKLEAKAEKKALREQELKIREDQKKKDALLEEQRKVEAEKEAEEERKREEAEKKAREEKARQEHEEYLRMKEAFSVEEEGFDQEQEDDKQNMLQEFINFVKSNKVVVLEDLAVQFKLKTQAAIDRIVELQKDGRLSGVIDDRGKFIYISEEELNAVAKFIKQRGRVSITELAENSNNLINLVPVSAE.

The Lumenal segment spans residues 1–5 (MDLIL). A helical transmembrane segment spans residues 6-26 (LLGIAVALLVILVTLFFFTKG). Residues 27–287 (KGSQESGKYN…LINLVPVSAE (261 aa)) are Cytoplasmic-facing. 2 disordered regions span residues 28–102 (GSQE…KRAK) and 135–164 (KVEA…RQEH). The span at 44–68 (AQAAPRRAQVVRNQRNRARVAAAPA) shows a compositional bias: low complexity. Basic and acidic residues predominate over residues 85 to 102 (IPHADFNGEKMGAKKRAK).

The protein belongs to the DDRGK1 family. As to quaternary structure, interacts with Atg9; the interaction is transient.

It localises to the endoplasmic reticulum membrane. Substrate adapter for ufmylation, the covalent attachment of the ubiquitin-like modifier UFM1 to substrate proteins. Required for ufmylation of Atg9; protects the nervous system during aging, possibly by stabilizing Atg9 and supporting its function. The protein is DDRGK domain-containing protein 1 of Culex quinquefasciatus (Southern house mosquito).